The chain runs to 737 residues: Palmitoyltransferase akr1 (737 aa).

Residues 1 to 15 (MSSGNSSTGTHTNGN) show a composition bias toward low complexity. Residues 1–39 (MSSGNSSTGTHTNGNFATLGSSPPSAVGGKGRAIPPKVT) form a disordered region. The Cytoplasmic segment spans residues 1 to 313 (MSSGNSSTGT…WVRNKSLMSK (313 aa)). ANK repeat units lie at residues 96–125 (EGIT…DVNA), 130–159 (SVAT…DPLL), 163–192 (QGYN…PVDV), 196–225 (QGHT…HANA), and 228–258 (EGGL…DKFA). Helical transmembrane passes span 314 to 334 (FFFL…SNMV) and 335 to 355 (VYAA…VAQK). Residues 356–374 (AASQGPSEYRILQKTPYLS) are Cytoplasmic-facing. Residues 375 to 395 (GVFAGSLFWVGFRYVFYVLPV) form a helical membrane-spanning segment. The Lumenal portion of the chain corresponds to 396 to 401 (TYSTSP). The helical transmembrane segment at 402–422 (ILNGLFAIFFSLTTYFYIYSM) threads the bilayer. Over 423 to 498 (VEDPGFVPKL…DNCVGANNLR (76 aa)) the chain is Cytoplasmic. The region spanning 455 to 505 (NFCVSCMVRRPLRSKHCKRCARCVAKHDHHCPWIDNCVGANNLRHFVLYIT) is the DHHC domain. Cysteine 485 functions as the S-palmitoyl cysteine intermediate in the catalytic mechanism. The chain crosses the membrane as a helical span at residues 499-519 (HFVLYITCLEVGIVLFVQLTF). The Lumenal segment spans residues 520 to 548 (NYINSLPAPAQPQCNIINETLCDFVLRDT). A helical transmembrane segment spans residues 549 to 569 (FTLVLDLWVCIQLVWITMLVA). Topologically, residues 570–737 (VQMIQISRNQ…LSVEDPEQGV (168 aa)) are cytoplasmic.

Belongs to the DHHC palmitoyltransferase family. AKR/ZDHHC17 subfamily.

The protein localises to the early endosome membrane. It localises to the golgi apparatus membrane. It carries out the reaction L-cysteinyl-[protein] + hexadecanoyl-CoA = S-hexadecanoyl-L-cysteinyl-[protein] + CoA. In terms of biological role, palmitoyltransferase specific for casein kinase 1. The sequence is that of Palmitoyltransferase akr1 (akr1) from Aspergillus oryzae (strain ATCC 42149 / RIB 40) (Yellow koji mold).